The primary structure comprises 176 residues: Probable DNA-directed RNA polymerase subunit delta (176 aa).

The 68-residue stretch at K14–W81 folds into the HTH HARE-type domain. The disordered stretch occupies residues L114–A176. Composition is skewed to acidic residues over residues E116 to E145 and V153 to A176.

It belongs to the RpoE family. RNAP is composed of a core of 2 alpha, a beta and a beta' subunits. The core is associated with a delta subunit and one of several sigma factors.

Its function is as follows. Participates in both the initiation and recycling phases of transcription. In the presence of the delta subunit, RNAP displays an increased specificity of transcription, a decreased affinity for nucleic acids, and an increased efficiency of RNA synthesis because of enhanced recycling. This Staphylococcus aureus (strain bovine RF122 / ET3-1) protein is Probable DNA-directed RNA polymerase subunit delta.